Here is a 636-residue protein sequence, read N- to C-terminus: Transcription termination factor FttA (636 aa).

The interval 3–70 (SEMLEEIKRT…IIIRSDRSVL (68 aa)) is KHa. Positions 71-138 (MDPEKAIRKI…WAPKILRTPP (68 aa)) are KHb. Residues 179–383 (WARLTAMGGF…LVMESTYGGH (205 aa)) form a metallo-beta-lactamase N-terminus region. Zn(2+) is bound by residues His242, His244, Asp246, His247, His329, and Asp352. The segment at 384-577 (EDVQPSRNRA…MNIKTIEGFS (194 aa)) is beta-Casp. The interval 578–636 (GHSDRRQLMEYVKRISPKPEKILLCHGDNYKTLDLASSIYRTYRIETKTPLNLETVRIQ) is metallo-beta-lactamase C-terminus. His603 lines the Zn(2+) pocket.

It belongs to the metallo-beta-lactamase superfamily. RNA-metabolizing metallo-beta-lactamase-like family. FttA subfamily. In terms of assembly, homodimer. Interacts with RNA polymerase (RNAP), interacts with the Spt4-Spt5 complex. Does not seem to interact with the RNA degrading exosome. It depends on Zn(2+) as a cofactor.

Most active at 0.5 M or 0.7 M NaCl, less active at 1.0 M NaCl. Nuclease activity is inhibited by N,N,Tetrakis-(2-pyridylmethyl)-ethylene diamine (TPEN), a specific chelator of zinc ions. Functionally, terminates transcription on the whole genome. Termination is linked to FttA-mediated RNA cleavage and does not require NTP hydrolysis. Cleaves endonucleolytically at the RNA exit channel of RNA polymerase (RNAP); the 5'-3' exonuclease activity of this protein degrades the nascent RNA released from RNAP. An RNA nuclease, it bind single-stranded RNA (ssRNA) with a preference for U-rich sequences. This is Transcription termination factor FttA from Methanothermobacter thermautotrophicus (strain ATCC 29096 / DSM 1053 / JCM 10044 / NBRC 100330 / Delta H) (Methanobacterium thermoautotrophicum).